The primary structure comprises 147 residues: Transcriptional regulator MraZ (147 aa).

SpoVT-AbrB domains lie at 6-48 (NFER…NSEE) and 77-120 (TVEV…SKAK).

It belongs to the MraZ family. In terms of assembly, forms oligomers.

It is found in the cytoplasm. Its subcellular location is the nucleoid. This Mycoplasmopsis pulmonis (strain UAB CTIP) (Mycoplasma pulmonis) protein is Transcriptional regulator MraZ.